A 46-amino-acid chain; its full sequence is Protein PsbN (46 aa).

A helical membrane pass occupies residues 7 to 27 (ALSVAIGVLAVLLGMTGFGVY).

The protein belongs to the PsbN family.

It is found in the cellular thylakoid membrane. Functionally, may play a role in photosystem I and II biogenesis. The sequence is that of Protein PsbN from Parasynechococcus marenigrum (strain WH8102).